Consider the following 421-residue polypeptide: uncharacterized protein (421 aa).

CBS domains are found at residues 13-74, 74-133, 139-195, and 217-274; these read MTKD…VRSL, LMYK…MKDT, MTRN…PKKK, and MNTP…KGAM.

This is an uncharacterized protein from Methanocaldococcus jannaschii (strain ATCC 43067 / DSM 2661 / JAL-1 / JCM 10045 / NBRC 100440) (Methanococcus jannaschii).